Consider the following 104-residue polypeptide: Pterin-4-alpha-carbinolamine dehydratase (104 aa).

A2 is subject to N-acetylalanine. Residues 61 to 63 and 78 to 81 each bind substrate; these read DHH and STHE.

It belongs to the pterin-4-alpha-carbinolamine dehydratase family. Homotetramer and homodimer. Heterotetramer with HNF1A; formed by a dimer of dimers. Interacts with HNF1B (via HNF-p1 domain); the interaction increases HNF1B transactivation activity.

The protein resides in the cytoplasm. It localises to the nucleus. It catalyses the reaction (4aS,6R)-4a-hydroxy-L-erythro-5,6,7,8-tetrahydrobiopterin = (6R)-L-erythro-6,7-dihydrobiopterin + H2O. Functionally, involved in tetrahydrobiopterin biosynthesis. Seems to both prevent the formation of 7-pterins and accelerate the formation of quinonoid-BH2. Coactivator for HNF1A-dependent transcription. Regulates the dimerization of homeodomain protein HNF1A and enhances its transcriptional activity. Also acts as a coactivator for HNF1B-dependent transcription. The sequence is that of Pterin-4-alpha-carbinolamine dehydratase (Pcbd1) from Rattus norvegicus (Rat).